A 200-amino-acid chain; its full sequence is Riboflavin kinase (200 aa).

The disordered stretch occupies residues 1–20 (MATARPSIVGPDSGPESPFP). Thr-42 and Asn-44 together coordinate Mg(2+). Glu-110 functions as the Nucleophile in the catalytic mechanism.

It belongs to the flavokinase family. Zn(2+) serves as cofactor. Mg(2+) is required as a cofactor.

The catalysed reaction is riboflavin + ATP = FMN + ADP + H(+). Its pathway is cofactor biosynthesis; FMN biosynthesis; FMN from riboflavin (ATP route): step 1/1. In terms of biological role, catalyzes the phosphorylation of riboflavin (vitamin B2) to form flavin mononucleotide (FMN) coenzyme. The polypeptide is Riboflavin kinase (FMN1) (Pyricularia oryzae (strain 70-15 / ATCC MYA-4617 / FGSC 8958) (Rice blast fungus)).